Reading from the N-terminus, the 354-residue chain is Glutamine synthetase (354 aa).

Residues 22 to 101 (IQAEYVWVDG…VLAETYNSDG (80 aa)) form the GS beta-grasp domain. The 247-residue stretch at 108–354 (FRHHAAKVME…IIVETTLLNA (247 aa)) folds into the GS catalytic domain.

The protein belongs to the glutamine synthetase family. In terms of assembly, homooctamer.

It localises to the cytoplasm. The enzyme catalyses L-glutamate + NH4(+) + ATP = L-glutamine + ADP + phosphate + H(+). This chain is Glutamine synthetase (GLN1), found in Hebeloma cylindrosporum.